The primary structure comprises 248 residues: Type III pantothenate kinase (248 aa).

An ATP-binding site is contributed by 6 to 13; it reads ELGNSQLK. Residues Tyr94 and 101-104 contribute to the substrate site; that span reads GVDR. Asp103 functions as the Proton acceptor in the catalytic mechanism. K(+) is bound at residue Asp123. An ATP-binding site is contributed by Thr126. Thr179 serves as a coordination point for substrate.

The protein belongs to the type III pantothenate kinase family. In terms of assembly, homodimer. The cofactor is NH4(+). K(+) is required as a cofactor.

The protein localises to the cytoplasm. The catalysed reaction is (R)-pantothenate + ATP = (R)-4'-phosphopantothenate + ADP + H(+). The protein operates within cofactor biosynthesis; coenzyme A biosynthesis; CoA from (R)-pantothenate: step 1/5. Its function is as follows. Catalyzes the phosphorylation of pantothenate (Pan), the first step in CoA biosynthesis. The sequence is that of Type III pantothenate kinase from Hydrogenovibrio crunogenus (strain DSM 25203 / XCL-2) (Thiomicrospira crunogena).